The primary structure comprises 241 residues: Geranylgeranylglyceryl phosphate synthase (241 aa).

Residues aspartate 19 and serine 46 each contribute to the Mg(2+) site. Sn-glycerol 1-phosphate-binding positions include 167-173 (YLEAGSG), 198-199 (GG), and 220-221 (GT).

Belongs to the GGGP/HepGP synthase family. Group II subfamily. It depends on Mg(2+) as a cofactor.

Its subcellular location is the cytoplasm. The catalysed reaction is sn-glycerol 1-phosphate + (2E,6E,10E)-geranylgeranyl diphosphate = sn-3-O-(geranylgeranyl)glycerol 1-phosphate + diphosphate. It participates in membrane lipid metabolism; glycerophospholipid metabolism. Prenyltransferase that catalyzes the transfer of the geranylgeranyl moiety of geranylgeranyl diphosphate (GGPP) to the C3 hydroxyl of sn-glycerol-1-phosphate (G1P). This reaction is the first ether-bond-formation step in the biosynthesis of archaeal membrane lipids. The polypeptide is Geranylgeranylglyceryl phosphate synthase (Pyrobaculum calidifontis (strain DSM 21063 / JCM 11548 / VA1)).